Consider the following 397-residue polypeptide: Argininosuccinate synthase (397 aa).

9–17 provides a ligand contact to ATP; that stretch reads AYSGGLDTS. Tyr86 is a binding site for L-citrulline. Residue Gly116 coordinates ATP. L-aspartate is bound by residues Thr118, Asn122, and Asp123. L-citrulline is bound at residue Asn122. 4 residues coordinate L-citrulline: Arg126, Ser174, Glu259, and Tyr271.

It belongs to the argininosuccinate synthase family. Type 1 subfamily. In terms of assembly, homotetramer.

It is found in the cytoplasm. It carries out the reaction L-citrulline + L-aspartate + ATP = 2-(N(omega)-L-arginino)succinate + AMP + diphosphate + H(+). The protein operates within amino-acid biosynthesis; L-arginine biosynthesis; L-arginine from L-ornithine and carbamoyl phosphate: step 2/3. In Lactococcus lactis subsp. cremoris (strain MG1363), this protein is Argininosuccinate synthase.